The sequence spans 83 residues: Small ribosomal subunit protein bS20 (83 aa).

The protein belongs to the bacterial ribosomal protein bS20 family.

Its function is as follows. Binds directly to 16S ribosomal RNA. The protein is Small ribosomal subunit protein bS20 of Staphylococcus carnosus (strain TM300).